Consider the following 269-residue polypeptide: Monofunctional glycosyltransferase (269 aa).

A helical transmembrane segment spans residues 46 to 66 (AIITILILLIIFFGVMYFISS).

It belongs to the glycosyltransferase 51 family.

It localises to the cell membrane. It carries out the reaction [GlcNAc-(1-&gt;4)-Mur2Ac(oyl-L-Ala-gamma-D-Glu-L-Lys-D-Ala-D-Ala)](n)-di-trans,octa-cis-undecaprenyl diphosphate + beta-D-GlcNAc-(1-&gt;4)-Mur2Ac(oyl-L-Ala-gamma-D-Glu-L-Lys-D-Ala-D-Ala)-di-trans,octa-cis-undecaprenyl diphosphate = [GlcNAc-(1-&gt;4)-Mur2Ac(oyl-L-Ala-gamma-D-Glu-L-Lys-D-Ala-D-Ala)](n+1)-di-trans,octa-cis-undecaprenyl diphosphate + di-trans,octa-cis-undecaprenyl diphosphate + H(+). The protein operates within cell wall biogenesis; peptidoglycan biosynthesis. Its function is as follows. Peptidoglycan polymerase that catalyzes glycan chain elongation using lipid-linked disaccharide-pentapeptide as the substrate. In Staphylococcus epidermidis (strain ATCC 35984 / DSM 28319 / BCRC 17069 / CCUG 31568 / BM 3577 / RP62A), this protein is Monofunctional glycosyltransferase.